Here is a 161-residue protein sequence, read N- to C-terminus: Cyclic pyranopterin monophosphate synthase (161 aa).

Substrate is bound by residues 75-77 (LCH) and 113-114 (ME). Residue aspartate 128 is part of the active site.

Belongs to the MoaC family. As to quaternary structure, homohexamer; trimer of dimers.

The enzyme catalyses (8S)-3',8-cyclo-7,8-dihydroguanosine 5'-triphosphate = cyclic pyranopterin phosphate + diphosphate. It functions in the pathway cofactor biosynthesis; molybdopterin biosynthesis. Catalyzes the conversion of (8S)-3',8-cyclo-7,8-dihydroguanosine 5'-triphosphate to cyclic pyranopterin monophosphate (cPMP). The polypeptide is Cyclic pyranopterin monophosphate synthase (Escherichia coli O139:H28 (strain E24377A / ETEC)).